The primary structure comprises 342 residues: N-acetyl-gamma-glutamyl-phosphate reductase (342 aa).

Cys-149 is an active-site residue.

The protein belongs to the NAGSA dehydrogenase family. Type 1 subfamily.

Its subcellular location is the cytoplasm. It carries out the reaction N-acetyl-L-glutamate 5-semialdehyde + phosphate + NADP(+) = N-acetyl-L-glutamyl 5-phosphate + NADPH + H(+). The protein operates within amino-acid biosynthesis; L-arginine biosynthesis; N(2)-acetyl-L-ornithine from L-glutamate: step 3/4. In terms of biological role, catalyzes the NADPH-dependent reduction of N-acetyl-5-glutamyl phosphate to yield N-acetyl-L-glutamate 5-semialdehyde. The sequence is that of N-acetyl-gamma-glutamyl-phosphate reductase from Paracoccus denitrificans (strain Pd 1222).